Consider the following 288-residue polypeptide: Histone H3-like centromeric protein hcp-3 (288 aa).

Residues 96-194 are disordered; that stretch reads YHARKEQARR…VTKTRRYRPG (99 aa). Residues 178–193 are compositionally biased toward basic residues; it reads MRAGRNRVTKTRRYRP. The segment at 191-288 is H3-like; sequence YRPGQKALEE…LYRRLCLRHL (98 aa).

The protein belongs to the histone H3 family. As to quaternary structure, forms a nucleosome-like histone octamer containing two molecules each of H2A, H2B, hcp-3 and H4 assembled in one hcp-3-H4 heterotetramer and two H2A-H2B heterodimers. The hcp-3-H4 heterotetramer is more compact and structurally more rigid than corresponding H3-H4 heterotetramers. Interacts with knl-2. Interacts with lin-53.

Its subcellular location is the nucleus. The protein localises to the chromosome. It localises to the centromere. It is found in the kinetochore. Its function is as follows. Histone H3-like variant which exclusively replaces conventional H3 in the nucleosome core of centromeric chromatin at the inner plate of the kinetochore. Required for recruitment and assembly of kinetochore proteins, mitotic progression and chromosome segregation. May serve as an epigenetic mark that propagates centromere identity through replication and cell division. Might promote cleavage furrow stability during cytokinesis. Not required for chromosome segregation during meiosis. This chain is Histone H3-like centromeric protein hcp-3, found in Caenorhabditis elegans.